The sequence spans 196 residues: Imidazoleglycerol-phosphate dehydratase (196 aa).

The protein belongs to the imidazoleglycerol-phosphate dehydratase family.

It localises to the cytoplasm. It carries out the reaction D-erythro-1-(imidazol-4-yl)glycerol 3-phosphate = 3-(imidazol-4-yl)-2-oxopropyl phosphate + H2O. Its pathway is amino-acid biosynthesis; L-histidine biosynthesis; L-histidine from 5-phospho-alpha-D-ribose 1-diphosphate: step 6/9. The protein is Imidazoleglycerol-phosphate dehydratase of Clostridium botulinum (strain Kyoto / Type A2).